A 473-amino-acid chain; its full sequence is Ammonium transporter Rh type C (473 aa).

Residues 1–9 (MLRNSNMRW) lie on the Cytoplasmic side of the membrane. The chain crosses the membrane as a helical span at residues 10 to 30 (RLPLICFVWEIAMIVLFGIFV). At 31–61 (RYNDEADPHWPIFMKHENITSDIENDFYFRY) the chain is on the extracellular side. Asn48 is a glycosylation site (N-linked (GlcNAc...) asparagine). A helical membrane pass occupies residues 62-82 (PSFQDVHVMIFVGFGFLMTFL). Residues 83-86 (QRYG) lie on the Cytoplasmic side of the membrane. A helical membrane pass occupies residues 87–107 (FGSVAFNFLLAAFGIQWALLM). The Extracellular segment spans residues 108-125 (QGWFHTFVNGKILIGVES). Residues 126 to 145 (LINADFCVGSVCIAFGGVLG) traverse the membrane as a helical segment. Residues 146–151 (KVSPVQ) lie on the Cytoplasmic side of the membrane. Residues 152-171 (IMLMTLFQVTLFAVNEWILL) form a helical membrane-spanning segment. Over 172–179 (NKLHVIDA) the chain is Extracellular. A helical membrane pass occupies residues 180-200 (GGSMTIHTFGAYFGLTVAWIL). Over 201-219 (SRPKLKQNNDKEGSTYISD) the chain is Cytoplasmic. Residues 220 to 240 (LFSMIGTLFLWMYWPSFNSAI) form a helical membrane-spanning segment. Topologically, residues 241–251 (SYHGDAQHRAA) are extracellular. The helical transmembrane segment at 252–272 (INTYCSLAACVLTTVAISSVV) threads the bilayer. The Cytoplasmic portion of the chain corresponds to 273–285 (NKKGKLEMVHIQN). Residues 286 to 306 (ATLAGGVAVGTAAEMMLTPYG) traverse the membrane as a helical segment. Residue Ser307 is a topological domain, extracellular. Residues 308 to 328 (LIVGFICGIVSTLGFTYLSPI) form a helical membrane-spanning segment. Over 329-343 (LSNKLRLHDTCGIHN) the chain is Cytoplasmic. Residues 344–364 (LHAIPGLIGGIVGAVTAACAT) form a helical membrane-spanning segment. The Extracellular segment spans residues 365–396 (EGVYTAEGLKKMFHFEGEYADRTPSIQGIYQA). Residues 397–417 (AGIGVSLAFGIVGGTVVGCIL) traverse the membrane as a helical segment. Residues 418 to 473 (KLPIWGDPSDENCFDDDVYWELREEDEEEHLGAANQYITHLPENFKLPDRTEISFK) are Cytoplasmic-facing.

This sequence belongs to the ammonium transporter (TC 2.A.49) family. Rh subfamily. In terms of assembly, homotrimer.

The protein localises to the apical cell membrane. Functions as an ammonia transporter. The polypeptide is Ammonium transporter Rh type C (rhcg) (Xenopus laevis (African clawed frog)).